Here is a 132-residue protein sequence, read N- to C-terminus: Small ribosomal subunit protein uS8 (132 aa).

The protein belongs to the universal ribosomal protein uS8 family. Part of the 30S ribosomal subunit. Contacts proteins S5 and S12.

One of the primary rRNA binding proteins, it binds directly to 16S rRNA central domain where it helps coordinate assembly of the platform of the 30S subunit. The sequence is that of Small ribosomal subunit protein uS8 from Heliobacterium modesticaldum (strain ATCC 51547 / Ice1).